The following is a 618-amino-acid chain: MPASLLDTIESPADLRALPAAELPGLAAEVRAFLIDSVAGTGGHLASNLGAVELTLALHYVFDTPRDRIVWDVGHQSYTHKILTGRRDAMQGLRQRGGIAGFPRRAESEFDAFGTGHSSTSISAALGMAEAFHQLGSDQRAVAVIGDGAMTAGMAFEALNNAGATELPLLVVLNDNDMSISPNVGALNNYLARLMSGRFYAAARRAGDKVLSVAPPIRELAKRAEEHMKGMVTPGTLFEEFGFNYIGPIDGHDLDVLVNTLRNIRHLRGPQFLHVVTRKGKGYTPAETNPCLYHGVARFDPAAGVAEKRAGKPSYTEVFGDWLCDMAASDPRLVGITPAMREGSGLVRFSQEFPERYFDVGIAEQHALTFAAGLACEGVKPVVAIYSTFLQRAYDQLIHDIALQNLPVTLAIDRAGLVGADGPTHAGSFDLSFLRCVPDLVIAAPSDENECRRLLSTAFLHDGPAAVRYPRGCGTGAAIEPGLEPVEIGKGVCRRRGRDVALLAFGSLVAPALTAAERLDATVADMRFVKPLDVDLVGELAAGHRLLVTLEENAVAGGAGAAVAELLAQLGIVVPVLQLGLSDVFIEHGDAAAMLAACGLDAPGIERAVSERLAALPE.

Thiamine diphosphate is bound by residues H75 and 116–118; that span reads GHS. Mg(2+) is bound at residue D147. Thiamine diphosphate is bound by residues 148-149, N176, Y283, and E364; that span reads GA. A Mg(2+)-binding site is contributed by N176.

Belongs to the transketolase family. DXPS subfamily. Homodimer. The cofactor is Mg(2+). Thiamine diphosphate serves as cofactor.

The enzyme catalyses D-glyceraldehyde 3-phosphate + pyruvate + H(+) = 1-deoxy-D-xylulose 5-phosphate + CO2. It functions in the pathway metabolic intermediate biosynthesis; 1-deoxy-D-xylulose 5-phosphate biosynthesis; 1-deoxy-D-xylulose 5-phosphate from D-glyceraldehyde 3-phosphate and pyruvate: step 1/1. In terms of biological role, catalyzes the acyloin condensation reaction between C atoms 2 and 3 of pyruvate and glyceraldehyde 3-phosphate to yield 1-deoxy-D-xylulose-5-phosphate (DXP). This Thiobacillus denitrificans (strain ATCC 25259 / T1) protein is 1-deoxy-D-xylulose-5-phosphate synthase.